Reading from the N-terminus, the 161-residue chain is Large ribosomal subunit protein uL11 (161 aa).

Belongs to the universal ribosomal protein uL11 family. Part of the ribosomal stalk of the 50S ribosomal subunit. Interacts with L10 and the large rRNA to form the base of the stalk. L10 forms an elongated spine to which L12 dimers bind in a sequential fashion forming a multimeric L10(L12)X complex.

In terms of biological role, forms part of the ribosomal stalk which helps the ribosome interact with GTP-bound translation factors. The sequence is that of Large ribosomal subunit protein uL11 from Methanocaldococcus jannaschii (strain ATCC 43067 / DSM 2661 / JAL-1 / JCM 10045 / NBRC 100440) (Methanococcus jannaschii).